The primary structure comprises 553 residues: MAPIDVGDFVPDGSISFFDDDDQLQTVSVHSLAAGKKVILFGVPGAFPPTCSMNHVNGFIEKAEELKSNGVDEIICLSGDDPFMITACSENKHVKFVEDGSGEYIQLLGLELEVKDKGLGVRSRGFALLLDNLKVIVVNVGSGGDCSLFQLMKMTTTTMSNLPTDLLEEIISRVPRKYMRAVRLTCKRWNGMFKSQSFTKMHIGKEEAATRELRQTRMIVMMDYNVYLMGIAVNEIPSIETLGKLTCLDDSEQVKISQVFCCEGLLLCILKDDDTKIVVWNPYLGQTRWIQTRLICCVSGWKKYALGYGNNSENRSCRSPKILRVTDNFNIFSENIPLQYEIYDFDSDVWTTLDVSPHWFIMSERGLSLKGNTYWGAKERHAYGSIDHIICFDFTRERFGPLLPLPFSAWGAQFASLSSVREDKITALFQNCRAYKLELWITTKIDVNNATWSKFFTMDTPYLHEILSLKTFFIDEENKIVVVSNKERDTKGDLTHDSIDIINGEARCLWKLGLGKPADKNCWPLVCPYVPSVVQIKQHKGGKTKEQSDYKRH.

In terms of domain architecture, Thioredoxin spans 4–160; the sequence is IDVGDFVPDG…LMKMTTTTMS (157 aa). The active-site Cysteine sulfenic acid (-SOH) intermediate is the Cys-51. In terms of domain architecture, F-box spans 156-201; it reads TTTMSNLPTDLLEEIISRVPRKYMRAVRLTCKRWNGMFKSQSFTKM.

Belongs to the peroxiredoxin family. Prx5 subfamily. In terms of assembly, monomer.

The enzyme catalyses [glutaredoxin]-dithiol + a hydroperoxide = [glutaredoxin]-disulfide + an alcohol + H2O. Thiol-specific peroxidase that catalyzes the reduction of hydrogen peroxide and organic hydroperoxides to water and alcohols, respectively. Plays a role in cell protection against oxidative stress by detoxifying peroxides. May be involved in intracellular redox signaling. The protein is Peroxiredoxin-2A (PRXIIA) of Arabidopsis thaliana (Mouse-ear cress).